The chain runs to 193 residues: GTP cyclohydrolase-2 (193 aa).

Arginine 45–glutamate 49 is a GTP binding site. The Zn(2+) site is built by cysteine 50, cysteine 61, and cysteine 63. GTP is bound by residues glutamine 66, glutamate 87–arginine 89, and threonine 109. The active-site Proton acceptor is aspartate 121. The active-site Nucleophile is arginine 123. Positions 144 and 149 each coordinate GTP.

It belongs to the GTP cyclohydrolase II family. The cofactor is Zn(2+).

The catalysed reaction is GTP + 4 H2O = 2,5-diamino-6-hydroxy-4-(5-phosphoribosylamino)-pyrimidine + formate + 2 phosphate + 3 H(+). It functions in the pathway cofactor biosynthesis; riboflavin biosynthesis; 5-amino-6-(D-ribitylamino)uracil from GTP: step 1/4. Functionally, catalyzes the conversion of GTP to 2,5-diamino-6-ribosylamino-4(3H)-pyrimidinone 5'-phosphate (DARP), formate and pyrophosphate. The chain is GTP cyclohydrolase-2 from Campylobacter hominis (strain ATCC BAA-381 / DSM 21671 / CCUG 45161 / LMG 19568 / NCTC 13146 / CH001A).